The primary structure comprises 230 residues: 5'-methylthioadenosine/S-adenosylhomocysteine nucleosidase (230 aa).

Catalysis depends on E12, which acts as the Proton acceptor. Substrate contacts are provided by residues G78, I153, and 174 to 175 (ME). D198 serves as the catalytic Proton donor.

Belongs to the PNP/UDP phosphorylase family. MtnN subfamily.

The enzyme catalyses S-adenosyl-L-homocysteine + H2O = S-(5-deoxy-D-ribos-5-yl)-L-homocysteine + adenine. It catalyses the reaction S-methyl-5'-thioadenosine + H2O = 5-(methylsulfanyl)-D-ribose + adenine. It carries out the reaction 5'-deoxyadenosine + H2O = 5-deoxy-D-ribose + adenine. It functions in the pathway amino-acid biosynthesis; L-methionine biosynthesis via salvage pathway; S-methyl-5-thio-alpha-D-ribose 1-phosphate from S-methyl-5'-thioadenosine (hydrolase route): step 1/2. Catalyzes the irreversible cleavage of the glycosidic bond in both 5'-methylthioadenosine (MTA) and S-adenosylhomocysteine (SAH/AdoHcy) to adenine and the corresponding thioribose, 5'-methylthioribose and S-ribosylhomocysteine, respectively. Also cleaves 5'-deoxyadenosine, a toxic by-product of radical S-adenosylmethionine (SAM) enzymes, into 5-deoxyribose and adenine. The polypeptide is 5'-methylthioadenosine/S-adenosylhomocysteine nucleosidase (Shewanella pealeana (strain ATCC 700345 / ANG-SQ1)).